We begin with the raw amino-acid sequence, 195 residues long: Pyruvoyl-dependent arginine decarboxylase AaxB (195 aa).

A Pyruvic acid (Ser) modification is found at S53.

The protein belongs to the pyruvoyl-dependent arginine decarboxylase family. As to quaternary structure, trimer of an alpha-beta dimer. Requires pyruvate as cofactor.

It localises to the cytoplasm. The enzyme catalyses L-arginine + H(+) = agmatine + CO2. In terms of biological role, part of the AaxABC system, catalyzes the decarboxylation of L-arginine. The arginine uptake by the bacterium in the macrophage may be a virulence factor against the host innate immune response. This is Pyruvoyl-dependent arginine decarboxylase AaxB (aaxB) from Chlamydia muridarum (strain MoPn / Nigg).